The following is a 288-amino-acid chain: NADPH-dependent aldehyde reductase 1, chloroplastic (288 aa).

A compositionally biased stretch (basic and acidic residues) spans 1 to 18; the sequence is MASEKQKQHAQPGKEHVM. The interval 1-32 is disordered; it reads MASEKQKQHAQPGKEHVMESSPQFSSSDYQPS. Residues 20-32 are compositionally biased toward polar residues; sequence SSPQFSSSDYQPS. 47–71 provides a ligand contact to NADP(+); the sequence is SGIGRAVGYCFASEGATVAFTYVKG. A substrate-binding site is contributed by serine 179. Tyrosine 192 acts as the Proton acceptor in catalysis.

The protein belongs to the short-chain dehydrogenases/reductases (SDR) family.

Its subcellular location is the plastid. It is found in the chloroplast. Its function is as follows. Aldehyde reductase that catalyzes the reduction of the aldehyde carbonyl groups on saturated and alpha,beta-unsaturated aldehydes with more than 5 carbons. No activity on alpha,beta-unsaturated ketones. Can use propionaldehyde, butyraldehyde, methylglyoxal, (e)-2-pentenal, (E)-2-hexenal, (Z)-3-hexenal and (E)-2-nonenal as substrates, but not propenal (acrolein), crotonaldehyde, 2-butanone, 3-buten-2-one or 1-penten-3-one. May act as a short alcohol-polyol-sugar dehydrogenase possibly related to carbohydrate metabolism and the acquisition of desiccation tolerance. May also be involved in signal transduction. The chain is NADPH-dependent aldehyde reductase 1, chloroplastic from Arabidopsis thaliana (Mouse-ear cress).